A 473-amino-acid polypeptide reads, in one-letter code: H(+)/Cl(-) exchange transporter ClcA (473 aa).

The Cytoplasmic segment spans residues 1 to 32 (MKTDTSTFLAQQIVRLRRRDQIRRLMQRDKTP). Residues 33–69 (LAILFMAAVVGTLTGLVGVAFEKTVSWVQNMRIGALV) traverse the membrane as a helical segment. The Periplasmic segment spans residues 70 to 76 (QVADHAF). Residues 77–100 (LLWPLAFILSALLAMVGYFLVRKF) traverse the membrane as a helical segment. Positions 106–110 (GSGIP) match the Selectivity filter part_1 motif. Serine 107 lines the chloride pocket. The helical intramembrane region spans 109–116 (IPEIEGAL). The Cytoplasmic portion of the chain corresponds to 117–123 (EELRPVR). Transmembrane regions (helical) follow at residues 124–141 (WWRV…TLGA) and 148–166 (EGPT…LDVF). The short motif at 146-150 (GREGP) is the Selectivity filter part_2 element. At 167–176 (RMRSAEARHT) the chain is on the cytoplasmic side. 2 consecutive intramembrane regions (helical) follow at residues 177 to 189 (LLAT…LSAA) and 193 to 201 (PLAGILFII). The Cytoplasmic segment spans residues 202–214 (EEMRPQFRYNLIS). The chain crosses the membrane as a helical span at residues 215-232 (IKAVFTGVIMSSIVFRIF). At 233–252 (NGEAPIIEVGKLSDAPVNTL) the chain is on the periplasmic side. Residues 253–281 (WLYLILGIIFGCVGPVFNSLVLRTQDMFQ) form a helical membrane-spanning segment. Residues 282-287 (RFHGGE) are Cytoplasmic-facing. The helical transmembrane segment at 288-309 (IKKWVLMGGAIGGLCGILGLIE) threads the bilayer. The Periplasmic portion of the chain corresponds to 310 to 329 (PAAAGGGFNLIPIAAAGNFS). 2 consecutive transmembrane segments (helical) span residues 330–349 (VGLL…LCFS) and 355–376 (GIFA…MAAA). Residues 355-359 (GIFAP) carry the Selectivity filter part_3 motif. Residues isoleucine 356 and phenylalanine 357 each coordinate chloride. Over 377–386 (VLFPQYHLEA) the chain is Periplasmic. The segment at residues 387–401 (GTFAIAGMGALMAAS) is an intramembrane region (helical). The segment at residues 402 to 404 (VRA) is an intramembrane region (note=Loop between two helices). Residues 405–416 (PLTGIVLVLEMT) constitute an intramembrane region (helical). Positions 417 to 421 (DNYQL) form an intramembrane region, note=Loop between two helices. The helical transmembrane segment at 422 to 438 (ILPMIITCLGATLLAQF) threads the bilayer. Over 439 to 473 (LGGKPLYSTILARTLAKQDAEQAAKNQNAPAGENT) the chain is Cytoplasmic. Tyrosine 445 provides a ligand contact to chloride.

The protein belongs to the chloride channel (TC 2.A.49) family. ClcA subfamily. As to quaternary structure, homodimer.

The protein resides in the cell inner membrane. The catalysed reaction is 2 chloride(in) + H(+)(out) = 2 chloride(out) + H(+)(in). Its function is as follows. Proton-coupled chloride transporter. Functions as antiport system and exchanges two chloride ions for 1 proton. Probably acts as an electrical shunt for an outwardly-directed proton pump that is linked to amino acid decarboxylation, as part of the extreme acid resistance (XAR) response. The protein is H(+)/Cl(-) exchange transporter ClcA of Salmonella typhi.